Consider the following 84-residue polypeptide: Cytochrome b559 subunit alpha (84 aa).

A helical membrane pass occupies residues 22-36 (IIHIPAITILFASGF). Residue His24 coordinates heme.

The protein belongs to the PsbE/PsbF family. Heterodimer of an alpha subunit and a beta subunit. PSII is composed of 1 copy each of membrane proteins PsbA, PsbB, PsbC, PsbD, PsbE, PsbF, PsbH, PsbI, PsbJ, PsbK, PsbL, PsbM, PsbT, PsbX, Psb30/Ycf12, peripheral proteins PsbO, CyanoQ (PsbQ), PsbU, PsbV and a large number of cofactors. It forms dimeric complexes. It depends on heme b as a cofactor.

Its subcellular location is the cell inner membrane. Its function is as follows. This b-type cytochrome is tightly associated with the reaction center of photosystem II (PSII). PSII is a light-driven water:plastoquinone oxidoreductase that uses light energy to abstract electrons from H(2)O, generating O(2) and a proton gradient subsequently used for ATP formation. It consists of a core antenna complex that captures photons, and an electron transfer chain that converts photonic excitation into a charge separation. This Gloeobacter violaceus (strain ATCC 29082 / PCC 7421) protein is Cytochrome b559 subunit alpha.